A 1407-amino-acid polypeptide reads, in one-letter code: DNA-directed RNA polymerase subunit beta' (1407 aa).

Zn(2+) contacts are provided by cysteine 70, cysteine 72, cysteine 85, and cysteine 88. Mg(2+) is bound by residues aspartate 460, aspartate 462, and aspartate 464. Positions 814, 888, 895, and 898 each coordinate Zn(2+). N6-acetyllysine is present on lysine 972.

This sequence belongs to the RNA polymerase beta' chain family. The RNAP catalytic core consists of 2 alpha, 1 beta, 1 beta' and 1 omega subunit. When a sigma factor is associated with the core the holoenzyme is formed, which can initiate transcription. Mg(2+) is required as a cofactor. Zn(2+) serves as cofactor.

The catalysed reaction is RNA(n) + a ribonucleoside 5'-triphosphate = RNA(n+1) + diphosphate. Its function is as follows. DNA-dependent RNA polymerase catalyzes the transcription of DNA into RNA using the four ribonucleoside triphosphates as substrates. This is DNA-directed RNA polymerase subunit beta' from Escherichia coli (strain SMS-3-5 / SECEC).